Consider the following 1175-residue polypeptide: Double-stranded RNA-specific adenosine deaminase (1175 aa).

Residues Arg-30 and Arg-42 each carry the asymmetric dimethylarginine modification. Residues 135–201 (LSISQNPEQK…GKPPLWSLVP (67 aa)) form the Z-binding 1 domain. The interaction with Z-DNA stretch occupies residues 135–204 (LSISQNPEQK…PLWSLVPLSQ (70 aa)). Positions 207–239 (TQPPRAVNSDKEVPRGEPDLDSEDGDPASDLEG) are disordered. A compositionally biased stretch (basic and acidic residues) spans 214–224 (NSDKEVPRGEP). Positions 225-235 (DLDSEDGDPAS) are enriched in acidic residues. 2 positions are modified to phosphoserine: Ser-228 and Ser-235. The region spanning 243-307 (LLDMAEIKEK…ATPPIWYLTD (65 aa)) is the Z-binding 2 domain. The interval 315 to 384 (MKRSTHSGPA…ARPGPVRLRP (70 aa)) is disordered. Residues 357–376 (KRVENGQEPVTKYESRHEAR) are compositionally biased toward basic and acidic residues. Lys-368 is covalently cross-linked (Glycyl lysine isopeptide (Lys-Gly) (interchain with G-Cter in SUMO); alternate). A Glycyl lysine isopeptide (Lys-Gly) (interchain with G-Cter in SUMO1); alternate cross-link involves residue Lys-368. Residue Lys-368 forms a Glycyl lysine isopeptide (Lys-Gly) (interchain with G-Cter in SUMO2); alternate linkage. Phosphoserine is present on Ser-431. Positions 453–521 (NPVSGLLEYA…AVKAMAILLR (69 aa)) constitute a DRBM 1 domain. The interval 524–561 (KAKDSGQPEELSNCPMEEDPEKPAESQPPSSSATSLFS) is disordered. Polar residues predominate over residues 550–561 (QPPSSSATSLFS). A phosphoserine mark is found at Ser-564, Ser-579, and Ser-586. Positions 564 to 632 (SPVTTLLECM…AEEAMKALQE (69 aa)) constitute a DRBM 2 domain. A disordered region spans residues 632 to 652 (EEAANSADDQSGGANTDSLDE). The span at 638–648 (ADDQSGGANTD) shows a compositional bias: polar residues. The N-terminal extension of DRBM 3 and constituent of a bi-partite nuclear localization signal stretch occupies residues 662–671 (IGELVRYLNT). A DRBM 3 domain is found at 672–740 (NPVGGLLEYA…ADAALRVLIG (69 aa)). Positions 741–747 (ESEKAEQ) are C-terminal extension of DRBM 3 and constituent of a bi-partite nuclear localization signal. A Phosphothreonine modification is found at Thr-754. A phosphoserine mark is found at Ser-760, Ser-769, and Ser-771. Lys-821 participates in a covalent cross-link: Glycyl lysine isopeptide (Lys-Gly) (interchain with G-Cter in SUMO2). One can recognise an A to I editase domain in the interval 832–1167 (SLGTGNRCVK…ISKPQEEKNF (336 aa)). Residue His-856 participates in Zn(2+) binding. Glu-858 acts as the Proton donor in catalysis. Zn(2+)-binding residues include Cys-912 and Cys-982.

As to quaternary structure, homodimer. Homodimerization is essential for its catalytic activity. Isoform 5 can form heterodimers with ADARB1/ADAR2. Isoform 1 interacts with ILF2/NF45 and ILF3/NF90. Binding to ILF3/NF90 up-regulates ILF3-mediated gene expression. Isoform 1 and isoform 5 (via DRBM 3 domain) interact with TNPO1. Isoform 5 (via DRBM domains) interacts with XPO5. Isoform 1 and isoform 5 can interact with EIF2AK2/PKR and UPF1. Sumoylation reduces RNA-editing activity. In terms of tissue distribution, detected in brain.

It localises to the cytoplasm. The protein resides in the nucleus. It catalyses the reaction adenosine in double-stranded RNA + H2O + H(+) = inosine in double-stranded RNA + NH4(+). Catalyzes the hydrolytic deamination of adenosine to inosine in double-stranded RNA (dsRNA) referred to as A-to-I RNA editing. This may affect gene expression and function in a number of ways that include mRNA translation by changing codons and hence the amino acid sequence of proteins; pre-mRNA splicing by altering splice site recognition sequences; RNA stability by changing sequences involved in nuclease recognition; genetic stability in the case of RNA virus genomes by changing sequences during viral RNA replication; and RNA structure-dependent activities such as microRNA production or targeting or protein-RNA interactions. Can edit both viral and cellular RNAs and can edit RNAs at multiple sites (hyper-editing) or at specific sites (site-specific editing). Its cellular RNA substrates include: bladder cancer-associated protein (BLCAP), neurotransmitter receptors for glutamate (GRIA2) and serotonin (HTR2C) and GABA receptor (GABRA3). Site-specific RNA editing of transcripts encoding these proteins results in amino acid substitutions which consequently alters their functional activities. Exhibits low-level editing at the GRIA2 Q/R site, but edits efficiently at the R/G site and HOTSPOT1. Does not affect polyomavirus replication but provides protection against virus-induced cytopathic effects. Essential for embryonic development and cell survival and plays a critical role in the maintenance of hematopoietic stem cells. This Rattus norvegicus (Rat) protein is Double-stranded RNA-specific adenosine deaminase (Adar).